The primary structure comprises 375 residues: MKWLSRILTVIVTMSMACGALIFNRRHQLKTKTLNFNHKALTIIIPARNEEKRIGHLLHSIIQQQVPVDVIVMNDGSTDETARVARSYGATVVDVVDDTDGKWYGKSHACYQGVTHACTNRIAFVDADVTFLRKDAVETLINQYQLQGEKGLLSVQPYHITKRFYEGFSAIFNLMTVVGMNVFSTLDDGRTNQHAFGPVTLTNKEDYYATGGHKSANRHIIEGFALGSAYTSQSLPVTVYEGFPFVAFRMYQEGFQSLQEGWTKHLSTGAGGTKPKIMTAIVLWLFGSIASILGLCLSLKYRQMSVRKMVALYLSYTTQFIYLHRRVGQFSNLLMVCHPLLFMFFTKIFIQSWKQTHRYGVVEWKGRQYSISKEQ.

Transmembrane regions (helical) follow at residues 3–23 (WLSR…ALIF), 164–184 (FYEG…NVFS), 277–297 (IMTA…GLCL), and 330–350 (FSNL…KIFI).

The protein belongs to the glycosyltransferase 2 family. CrtQ subfamily.

It is found in the cell membrane. The protein operates within carotenoid biosynthesis; staphyloxanthin biosynthesis; staphyloxanthin from farnesyl diphosphate: step 4/5. Catalyzes the glycosylation of 4,4'-diaponeurosporenoate, i.e. the esterification of glucose at the C1'' position with the carboxyl group of 4,4'-diaponeurosporenic acid, to form glycosyl-4,4'-diaponeurosporenoate. This is a step in the biosynthesis of staphyloxanthin, an orange pigment present in most staphylococci strains. This chain is 4,4'-diaponeurosporenoate glycosyltransferase (crtQ), found in Staphylococcus aureus (strain Mu50 / ATCC 700699).